A 475-amino-acid chain; its full sequence is Bifunctional protein HldE (475 aa).

Residues 1 to 318 (MKVTLPDFER…ENAVRGRAET (318 aa)) are ribokinase. 195–198 (NLSE) serves as a coordination point for ATP. Asp264 is an active-site residue. The segment at 344–475 (MTNGVFDILH…NIIKKIQKNS (132 aa)) is cytidylyltransferase.

This sequence in the N-terminal section; belongs to the carbohydrate kinase PfkB family. It in the C-terminal section; belongs to the cytidylyltransferase family. Homodimer.

The enzyme catalyses D-glycero-beta-D-manno-heptose 7-phosphate + ATP = D-glycero-beta-D-manno-heptose 1,7-bisphosphate + ADP + H(+). The catalysed reaction is D-glycero-beta-D-manno-heptose 1-phosphate + ATP + H(+) = ADP-D-glycero-beta-D-manno-heptose + diphosphate. It participates in nucleotide-sugar biosynthesis; ADP-L-glycero-beta-D-manno-heptose biosynthesis; ADP-L-glycero-beta-D-manno-heptose from D-glycero-beta-D-manno-heptose 7-phosphate: step 1/4. It functions in the pathway nucleotide-sugar biosynthesis; ADP-L-glycero-beta-D-manno-heptose biosynthesis; ADP-L-glycero-beta-D-manno-heptose from D-glycero-beta-D-manno-heptose 7-phosphate: step 3/4. In terms of biological role, catalyzes the phosphorylation of D-glycero-D-manno-heptose 7-phosphate at the C-1 position to selectively form D-glycero-beta-D-manno-heptose-1,7-bisphosphate. Catalyzes the ADP transfer from ATP to D-glycero-beta-D-manno-heptose 1-phosphate, yielding ADP-D-glycero-beta-D-manno-heptose. In Cronobacter sakazakii (strain ATCC BAA-894) (Enterobacter sakazakii), this protein is Bifunctional protein HldE.